A 251-amino-acid chain; its full sequence is PF03932 family protein CutC (251 aa).

It belongs to the CutC family.

The protein localises to the cytoplasm. The polypeptide is PF03932 family protein CutC (Agrobacterium fabrum (strain C58 / ATCC 33970) (Agrobacterium tumefaciens (strain C58))).